Reading from the N-terminus, the 150-residue chain is Large ribosomal subunit protein bL9 (150 aa).

Belongs to the bacterial ribosomal protein bL9 family.

Its function is as follows. Binds to the 23S rRNA. The polypeptide is Large ribosomal subunit protein bL9 (Neisseria gonorrhoeae).